The primary structure comprises 221 residues: Carotenogenesis protein CarR (221 aa).

Transmembrane regions (helical) follow at residues 56–76 (LGLLAAVVLLAVGAVTGPLLL), 79–99 (APLLAMLVGTSAVCAWGALSP), 107–127 (LGVGLAVVSAAALVLARGAPH), 136–156 (VCTVSHLAIGVVPLVVALFAL), 166–186 (AVVAGLSVGSTGALLGELACE), and 191–211 (HVLSHHLLAWVVITVVLVVIS).

It is found in the cell inner membrane. Negative regulator of the carotenoid synthesis regulon. It is probably inactivated by protoporphyrin IX in the presence of blue light. Inactivation of CarR leads to loss of negative control over the carotenogenesis protein CarQ. The polypeptide is Carotenogenesis protein CarR (carR) (Myxococcus xanthus).